The chain runs to 179 residues: SCAN domain-containing protein 1 (179 aa).

The interval 1 to 107 (MAATEPILAT…AGSRLGPETF (107 aa)) is disordered. The segment covering 52–80 (SPNAAVPEAIPTPRAAASAALELPLGPAP) has biased composition (low complexity). The 59-residue stretch at 108-166 (RQRFRQFRYQDAAGPREAFRQLRELSRQWLRPDIRTKEQIVEMLVQEQLLAILPEAARA) folds into the SCAN box domain.

As to quaternary structure, interacts with ZNF202.

It is found in the nucleus. Functionally, may regulate transcriptional activity. This is SCAN domain-containing protein 1 (SCAND1) from Pan paniscus (Pygmy chimpanzee).